The chain runs to 483 residues: NADH-quinone oxidoreductase subunit N (483 aa).

A run of 14 helical transmembrane segments spans residues 13–33, 39–57, 76–96, 110–130, 131–151, 165–185, 206–226, 240–260, 277–297, 302–322, 330–350, 373–393, 406–426, and 459–479; these read ALPE…DAAV, YLAY…FLTV, PLSD…LVYS, FFVL…ASHF, LTLY…VALQ, FVLG…VYGV, IPLV…LGAV, PTAM…AFVV, MLVI…IAQS, MFAY…LAGS, MFYV…ILLL, LAFV…TVGF, IGYV…AFYY, and LAVL…VQAI.

It belongs to the complex I subunit 2 family. As to quaternary structure, NDH-1 is composed of 14 different subunits. Subunits NuoA, H, J, K, L, M, N constitute the membrane sector of the complex.

The protein resides in the cell inner membrane. The enzyme catalyses a quinone + NADH + 5 H(+)(in) = a quinol + NAD(+) + 4 H(+)(out). NDH-1 shuttles electrons from NADH, via FMN and iron-sulfur (Fe-S) centers, to quinones in the respiratory chain. The immediate electron acceptor for the enzyme in this species is believed to be ubiquinone. Couples the redox reaction to proton translocation (for every two electrons transferred, four hydrogen ions are translocated across the cytoplasmic membrane), and thus conserves the redox energy in a proton gradient. This chain is NADH-quinone oxidoreductase subunit N, found in Thiobacillus denitrificans (strain ATCC 25259 / T1).